Reading from the N-terminus, the 259-residue chain is UPF0246 protein PSPA7_1607 (259 aa).

It belongs to the UPF0246 family.

The chain is UPF0246 protein PSPA7_1607 from Pseudomonas paraeruginosa (strain DSM 24068 / PA7) (Pseudomonas aeruginosa (strain PA7)).